The sequence spans 146 residues: Cytochrome c-type biogenesis protein CcmE (146 aa).

The Cytoplasmic segment spans residues 1 to 7 (MQAKHQR). The chain crosses the membrane as a helical; Signal-anchor for type II membrane protein span at residues 8–28 (LILGIIALAAVIAAGFLALVA). The Periplasmic portion of the chain corresponds to 29–146 (FKKQAAYFFT…AATQTTLQEK (118 aa)). 2 residues coordinate heme: histidine 123 and tyrosine 127.

Belongs to the CcmE/CycJ family.

The protein localises to the cell inner membrane. Its function is as follows. Heme chaperone required for the biogenesis of c-type cytochromes. Transiently binds heme delivered by CcmC and transfers the heme to apo-cytochromes in a process facilitated by CcmF and CcmH. The chain is Cytochrome c-type biogenesis protein CcmE from Zymomonas mobilis subsp. mobilis (strain ATCC 31821 / ZM4 / CP4).